We begin with the raw amino-acid sequence, 1548 residues long: Zinc finger MYM-type protein 4 (1548 aa).

N-acetylalanine is present on A2. T107 bears the Phosphothreonine mark. Residues S110 and S122 each carry the phosphoserine modification. Residues K140 and K149 each participate in a glycyl lysine isopeptide (Lys-Gly) (interchain with G-Cter in SUMO2) cross-link. Phosphoserine is present on S162. A disordered region spans residues 162–189 (SKETFSGKEKNRDLTYEREKRLDKPHKD). K195 participates in a covalent cross-link: Glycyl lysine isopeptide (Lys-Gly) (interchain with G-Cter in SUMO2). The residue at position 197 (S197) is a Phosphoserine. Glycyl lysine isopeptide (Lys-Gly) (interchain with G-Cter in SUMO2) cross-links involve residues K201 and K232. S242 carries the phosphoserine modification. K250 is covalently cross-linked (Glycyl lysine isopeptide (Lys-Gly) (interchain with G-Cter in SUMO1); alternate). K250 is covalently cross-linked (Glycyl lysine isopeptide (Lys-Gly) (interchain with G-Cter in SUMO2); alternate). Glycyl lysine isopeptide (Lys-Gly) (interchain with G-Cter in SUMO2) cross-links involve residues K260, K271, K273, K289, K327, K400, K428, and K430. 9 consecutive MYM-type zinc fingers follow at residues 362–402 (QLFC…PKDV), 414–457 (KDFC…RHEV), 464–499 (HKLC…GSGQ), 510–544 (KKFC…AEMI), 554–592 (ELFC…QYHL), 600–631 (RNFC…LSQG), 708–742 (FQFC…KETV), 749–788 (KSFC…LVQN), and 795–829 (EEFC…SESL). The residue at position 1030 (S1030) is a Phosphoserine. Glycyl lysine isopeptide (Lys-Gly) (interchain with G-Cter in SUMO2) cross-links involve residues K1035 and K1061. Phosphoserine is present on residues S1064 and S1071. Glycyl lysine isopeptide (Lys-Gly) (interchain with G-Cter in SUMO2) cross-links involve residues K1080 and K1127. A compositionally biased stretch (basic and acidic residues) spans 1124–1134 (SELKQFSKGET). Disordered regions lie at residues 1124-1183 (SELK…KSIV) and 1231-1260 (KCGG…QESS). Basic residues predominate over residues 1160–1181 (SRTRRRHRDGFPQPRRRGRKKS). 2 positions are modified to phosphoserine: S1181 and S1256. Over residues 1237 to 1260 (QASSSPRSDPLGSTQDHALSQESS) the composition is skewed to polar residues. Residue K1431 forms a Glycyl lysine isopeptide (Lys-Gly) (interchain with G-Cter in SUMO2) linkage. Phosphoserine is present on residues S1539, S1542, and S1547.

As to expression, expressed at higher level in heart, skeletal muscle, kidney and liver.

Functionally, plays a role in the regulation of cell morphology and cytoskeletal organization. The chain is Zinc finger MYM-type protein 4 (ZMYM4) from Homo sapiens (Human).